We begin with the raw amino-acid sequence, 219 residues long: Elongation factor Ts (219 aa).

Residues 82–85 (TDFV) form an involved in Mg(2+) ion dislocation from EF-Tu region.

The protein belongs to the EF-Ts family.

It localises to the cytoplasm. In terms of biological role, associates with the EF-Tu.GDP complex and induces the exchange of GDP to GTP. It remains bound to the aminoacyl-tRNA.EF-Tu.GTP complex up to the GTP hydrolysis stage on the ribosome. This Anaeromyxobacter sp. (strain K) protein is Elongation factor Ts.